Consider the following 61-residue polypeptide: Large ribosomal subunit protein eL37 (61 aa).

C20, C23, C35, and C38 together coordinate Zn(2+). The C4-type zinc finger occupies 20–38 (CRRCGRRAYHVRKKRCAAC).

This sequence belongs to the eukaryotic ribosomal protein eL37 family. Zn(2+) is required as a cofactor.

Functionally, binds to the 23S rRNA. This Methanocaldococcus jannaschii (strain ATCC 43067 / DSM 2661 / JAL-1 / JCM 10045 / NBRC 100440) (Methanococcus jannaschii) protein is Large ribosomal subunit protein eL37 (rpl37e).